We begin with the raw amino-acid sequence, 319 residues long: ATP-dependent 6-phosphofructokinase (319 aa).

ATP is bound at residue G11. 21–25 (RAVVR) lines the ADP pocket. ATP is bound by residues 72–73 (RC) and 102–105 (GDGS). D103 provides a ligand contact to Mg(2+). Position 125–127 (125–127 (TID)) interacts with substrate. The active-site Proton acceptor is the D127. R154 is a binding site for ADP. Residues R162 and 169–171 (MGR) each bind substrate. Residues 185 to 187 (GAE), R211, and 213 to 215 (KKH) each bind ADP. Substrate is bound by residues E222, R243, and 249-252 (HIQR).

The protein belongs to the phosphofructokinase type A (PFKA) family. ATP-dependent PFK group I subfamily. Prokaryotic clade 'B1' sub-subfamily. Homotetramer. It depends on Mg(2+) as a cofactor.

It is found in the cytoplasm. It carries out the reaction beta-D-fructose 6-phosphate + ATP = beta-D-fructose 1,6-bisphosphate + ADP + H(+). The protein operates within carbohydrate degradation; glycolysis; D-glyceraldehyde 3-phosphate and glycerone phosphate from D-glucose: step 3/4. Allosterically activated by ADP and other diphosphonucleosides, and allosterically inhibited by phosphoenolpyruvate. Functionally, catalyzes the phosphorylation of D-fructose 6-phosphate to fructose 1,6-bisphosphate by ATP, the first committing step of glycolysis. The polypeptide is ATP-dependent 6-phosphofructokinase (Bacillus velezensis (strain DSM 23117 / BGSC 10A6 / LMG 26770 / FZB42) (Bacillus amyloliquefaciens subsp. plantarum)).